The following is a 457-amino-acid chain: Galactose/lactose metabolism regulatory protein GAL80 (457 aa).

A disordered region spans residues 333–364 (NGTDNNGAAAIKDKEKVTKSPSPSTGTSEEEQ).

The protein to yeast GAL80.

This protein is a negative regulator for the gene expression of the lactose/galactose metabolic genes. It seems to block activation by the transcriptional activator LAC9 in the absence of an inducing sugar. The polypeptide is Galactose/lactose metabolism regulatory protein GAL80 (GAL80) (Kluyveromyces lactis (strain ATCC 8585 / CBS 2359 / DSM 70799 / NBRC 1267 / NRRL Y-1140 / WM37) (Yeast)).